The chain runs to 409 residues: Elongation factor Tu, cyanelle (409 aa).

The 205-residue stretch at 10–214 (KPHVNIGTIG…AVDEYIPTPE (205 aa)) folds into the tr-type G domain. A G1 region spans residues 19–26 (GHVDHGKT). 19 to 26 (GHVDHGKT) serves as a coordination point for GTP. Threonine 26 is a binding site for Mg(2+). Residues 60 to 64 (GITIN) form a G2 region. The segment at 81 to 84 (DCPG) is G3. Residues 81–85 (DCPGH) and 136–139 (NKED) each bind GTP. A G4 region spans residues 136 to 139 (NKED). Residues 174-176 (SAL) are G5.

The protein belongs to the TRAFAC class translation factor GTPase superfamily. Classic translation factor GTPase family. EF-Tu/EF-1A subfamily.

The protein localises to the plastid. It localises to the cyanelle. It carries out the reaction GTP + H2O = GDP + phosphate + H(+). Functionally, GTP hydrolase that promotes the GTP-dependent binding of aminoacyl-tRNA to the A-site of ribosomes during protein biosynthesis. The protein is Elongation factor Tu, cyanelle (tufA) of Cyanophora paradoxa.